We begin with the raw amino-acid sequence, 462 residues long: MVGFSGDTIAAIATAIVPQQGSVGIVRLSGAAATEIARQIFQIAGQQPWESHRILYGYIRDPESGRLVDEALLLPMLAPRSYTREDVVELHCHGGLMPVQQTLQLCIRAGARLAEPGEFTLRAFLNGRLDLSQAESIADLISAQSPQAAQAALGSLQGKLGHPIRQLRDRCLDILAEVEARIDFEDDLPPLDLEAIAAQLTAAGADMQAILSTADRGELLRTGLKIAIVGRPNVGKSSLLNAWSRCDRAIVTDLPGTTRDLVESQLIVGGIPVQVLDTAGIRETSDQVEQIGVERSRRAAQSADLVLLTIDASAGWSAEDQTIWEAVSDRPILLVINKRDRLSEAERHAIALPQQEFKAIVWTAAAQQQGIEDLEAAILAAVGTGDLTSANWDWALNQRQVAALTTAQTALRRVEETLQAQLPLDFWTIDLREAIAALGSITGEEIAESMLDLIFSRFCIGK.

Arginine 27, glutamate 89, and arginine 128 together coordinate (6S)-5-formyl-5,6,7,8-tetrahydrofolate. The TrmE-type G domain maps to 223–383 (GLKIAIVGRP…LEAAILAAVG (161 aa)). Asparagine 233 contacts K(+). GTP contacts are provided by residues 233–238 (NVGKSS), 252–258 (TDLPGTT), and 277–280 (DTAG). Serine 237 is a Mg(2+) binding site. K(+)-binding residues include threonine 252, leucine 254, and threonine 257. Mg(2+) is bound at residue threonine 258. Lysine 462 serves as a coordination point for (6S)-5-formyl-5,6,7,8-tetrahydrofolate.

Belongs to the TRAFAC class TrmE-Era-EngA-EngB-Septin-like GTPase superfamily. TrmE GTPase family. Homodimer. Heterotetramer of two MnmE and two MnmG subunits. Requires K(+) as cofactor.

It is found in the cytoplasm. Functionally, exhibits a very high intrinsic GTPase hydrolysis rate. Involved in the addition of a carboxymethylaminomethyl (cmnm) group at the wobble position (U34) of certain tRNAs, forming tRNA-cmnm(5)s(2)U34. This Synechococcus elongatus (strain ATCC 33912 / PCC 7942 / FACHB-805) (Anacystis nidulans R2) protein is tRNA modification GTPase MnmE.